We begin with the raw amino-acid sequence, 65 residues long: Metallothionein-3 (65 aa).

Methionine 1 bears the N-acetylmethionine mark. The tract at residues 1 to 30 is beta; sequence MDPEACPCPTGGSCTCSDSCKCEGCTCASS. A divalent metal cation is bound by residues cysteine 6, cysteine 8, cysteine 14, cysteine 16, cysteine 20, cysteine 22, cysteine 25, and cysteine 27. Residues 31–65 form an alpha region; sequence KKSCCPAECEKCAKDCVCKGGEGAEAEEKKCGCCQ. Serine 33 carries the phosphoserine modification. A divalent metal cation contacts are provided by cysteine 34, cysteine 35, cysteine 39, cysteine 42, cysteine 46, cysteine 48, cysteine 61, cysteine 63, and cysteine 64.

Belongs to the metallothionein superfamily. Type 1 family.

In terms of biological role, binds heavy metals. Contains five zinc and one copper atoms per polypeptide chain and only a negligible amount of cadmium. The protein is Metallothionein-3 (MT3) of Ovis aries (Sheep).